Reading from the N-terminus, the 471-residue chain is 5-hydroxytryptamine receptor 2A (471 aa).

Residues 1–80 lie on the Extracellular side of the membrane; the sequence is MDILCEENTS…LQEKNWSALL (80 aa). Asparagine 8, asparagine 38, asparagine 44, asparagine 51, and asparagine 54 each carry an N-linked (GlcNAc...) asparagine glycan. Residues 81-97 form a helical membrane-spanning segment; the sequence is TAVVIILTIAGNILVIM. The Cytoplasmic portion of the chain corresponds to 98-111; that stretch reads AVSLEKKLQNATNY. The chain crosses the membrane as a helical span at residues 112-137; sequence FLMSLAIADMLLGFLVMPVSMLTILY. Topologically, residues 138-146 are extracellular; it reads GYRWPLPSK. A helical membrane pass occupies residues 147-171; that stretch reads LCAVWIYLDVLFSTASIMHLCAISL. Cysteine 148 and cysteine 227 are oxidised to a cystine. Aspartate 155 contacts serotonin. Residues 172 to 174 carry the DRY motif; important for ligand-induced conformation changes motif; it reads DRY. The Cytoplasmic portion of the chain corresponds to 172–191; it reads DRYVAIQNPIHHSRFNSRTK. A helical membrane pass occupies residues 192 to 215; the sequence is AFLKIIAVWTISVGISMPIPVFGL. Residues 216–232 lie on the Extracellular side of the membrane; it reads QDDSKVFKEGSCLLADD. A helical membrane pass occupies residues 233-258; sequence NFVLIGSFVSFFIPLTIMVITYFLTI. Topologically, residues 259–322 are cytoplasmic; it reads KSLQKEATLC…QSISNEQKAC (64 aa). Serine 280 carries the post-translational modification Phosphoserine. The chain crosses the membrane as a helical span at residues 323 to 348; it reads KVLGIVFFLFVVMWCPFFITNIMAVI. Asparagine 343 is a serotonin binding site. Cysteine 349 and cysteine 353 form a disulfide bridge. At 349–356 the chain is on the extracellular side; sequence CKESCNED. A helical transmembrane segment spans residues 357–382; the sequence is VIGALLNVFVWIGYLSSAVNPLVYTL. The NPxxY motif; important for ligand-induced conformation changes and signaling signature appears at 376 to 380; sequence NPLVY. Residues 383-471 lie on the Cytoplasmic side of the membrane; that stretch reads FNKTYRSAFS…DGVNEKVSCV (89 aa). Over residues 451 to 465 the composition is skewed to basic and acidic residues; it reads QHSEEASKDNSDGVN. Residues 451–471 form a disordered region; sequence QHSEEASKDNSDGVNEKVSCV. The PDZ-binding signature appears at 469 to 471; the sequence is SCV.

It belongs to the G-protein coupled receptor 1 family. Interacts (via C-terminus) with MPDZ and PATJ. May interact (via C-terminus) with MPP3, PRDX6, DLG4, DLG1, CASK, APBA1 and MAGI2. Interacts with GRM2 and DRD2; this may affect signaling. Detected in brain cortex (at protein level). Detected in blood platelets.

It localises to the cell membrane. The protein resides in the cell projection. Its subcellular location is the dendrite. It is found in the axon. The protein localises to the cytoplasmic vesicle. It localises to the membrane. The protein resides in the caveola. Its subcellular location is the presynapse. Its activity is regulated as follows. G-protein coupled receptor activity is regulated by lipids: oleamide increases HTR2A-mediated activity. Inhibited by IHCH-7179 small molecule: IHCH-7179 acts both as an agonist activator for HTR1A and as an antagonist inhibitor for HTR2A. In terms of biological role, G-protein coupled receptor for 5-hydroxytryptamine (serotonin). Also functions as a receptor for various drugs and psychoactive substances, including mescaline, psilocybin, 1-(2,5-dimethoxy-4-iodophenyl)-2-aminopropane (DOI) and lysergic acid diethylamide (LSD). Ligand binding causes a conformation change that triggers signaling via guanine nucleotide-binding proteins (G proteins) and modulates the activity of downstream effectors. HTR2A is coupled to G(q)/G(11) G alpha proteins and activates phospholipase C-beta, releasing diacylglycerol (DAG) and inositol 1,4,5-trisphosphate (IP3) second messengers that modulate the activity of phosphatidylinositol 3-kinase and promote the release of Ca(2+) ions from intracellular stores, respectively. Beta-arrestin family members inhibit signaling via G proteins and mediate activation of alternative signaling pathways. Affects neural activity, perception, cognition and mood. Plays a role in the regulation of behavior, including responses to anxiogenic situations and psychoactive substances. Plays a role in intestinal smooth muscle contraction, and may play a role in arterial vasoconstriction. Its function is as follows. (Microbial infection) Acts as a receptor for human JC polyomavirus/JCPyV. This chain is 5-hydroxytryptamine receptor 2A, found in Homo sapiens (Human).